A 97-amino-acid chain; its full sequence is MAKSFPVFSLLSFILIHLVLSSVSGPRHWWPPRGIIKVKCPYEKVNLSWYNGTVNPCPGLYQPICGTNFITYDNPCILCVESLKSHGRIRFYHDGKC.

The first 21 residues, 1–21 (MAKSFPVFSLLSFILIHLVLS), serve as a signal peptide directing secretion. Positions 34 to 97 (GIIKVKCPYE…RIRFYHDGKC (64 aa)) constitute a Kazal-like domain. Intrachain disulfides connect C40–C79, C57–C76, and C65–C97. N51 is a glycosylation site (N-linked (GlcNAc...) asparagine).

It localises to the secreted. May be a serine protease inhibitor. This chain is Serine protease inhibitor Kazal-type 14 (SPINK14), found in Homo sapiens (Human).